Reading from the N-terminus, the 131-residue chain is Protein FAM107B (131 aa).

At Ala-2 the chain carries N-acetylalanine. Disordered stretches follow at residues 39-78 and 100-131; these read MNQK…KKKS and KLQE…AQES. Lys-50 is modified (N6-acetyllysine). Over residues 52–78 the composition is skewed to basic and acidic residues; the sequence is ELQKVMEKRRRDQVIKQKEEEAQKKKS. Residues 61 to 112 are a coiled coil; it reads RRDQVIKQKEEEAQKKKSDLEIELLKRQQKLEQLELEKQKLQEEQENAPEFV.

It belongs to the FAM107 family.

The protein is Protein FAM107B of Rattus norvegicus (Rat).